The chain runs to 217 residues: MSGGGGASAGDVSRETRERIEALVSRETLSRLEAFAALILRWTARINLVSRKDAAPAEIWNRHILDSLQMLPLVPQGAFRAADLGSGGGLPGLVLAIARPEIGFTLIESDRRKAAFLQTAIAELKLNATVLPVRIEQARLEPSPLVTARALAALPVLFGYAAPLLAPGGVCLFLKGRGADAELTAAAEGWQMRAERFPSQTDAGAAILRISELRRAA.

S-adenosyl-L-methionine-binding positions include G85, L90, 135–136 (IE), and R149.

The protein belongs to the methyltransferase superfamily. RNA methyltransferase RsmG family.

It localises to the cytoplasm. The catalysed reaction is guanosine(527) in 16S rRNA + S-adenosyl-L-methionine = N(7)-methylguanosine(527) in 16S rRNA + S-adenosyl-L-homocysteine. In terms of biological role, specifically methylates the N7 position of guanine in position 527 of 16S rRNA. The polypeptide is Ribosomal RNA small subunit methyltransferase G (Acidiphilium cryptum (strain JF-5)).